The primary structure comprises 78 residues: Acyl carrier protein (78 aa).

The Carrier domain maps to 2–77 (SDIAERVKKI…DAIKYIGENM (76 aa)). An O-(pantetheine 4'-phosphoryl)serine modification is found at serine 37.

Belongs to the acyl carrier protein (ACP) family. Post-translationally, 4'-phosphopantetheine is transferred from CoA to a specific serine of apo-ACP by AcpS. This modification is essential for activity because fatty acids are bound in thioester linkage to the sulfhydryl of the prosthetic group.

Its subcellular location is the cytoplasm. The protein operates within lipid metabolism; fatty acid biosynthesis. Functionally, carrier of the growing fatty acid chain in fatty acid biosynthesis. The sequence is that of Acyl carrier protein from Magnetococcus marinus (strain ATCC BAA-1437 / JCM 17883 / MC-1).